We begin with the raw amino-acid sequence, 97 residues long: MSVSIKPLEDRIVVRPLEAEQTTASGLLIPDSAQEKPQEGEVVAVGPGRFEDGNRVPVDVAVGDVVIYSKYGGTEVKTGGTEYLVLSARDVLAIVVK.

The protein belongs to the GroES chaperonin family. In terms of assembly, heptamer of 7 subunits arranged in a ring. Interacts with the chaperonin GroEL.

It localises to the cytoplasm. Its function is as follows. Together with the chaperonin GroEL, plays an essential role in assisting protein folding. The GroEL-GroES system forms a nano-cage that allows encapsulation of the non-native substrate proteins and provides a physical environment optimized to promote and accelerate protein folding. GroES binds to the apical surface of the GroEL ring, thereby capping the opening of the GroEL channel. The sequence is that of Co-chaperonin GroES from Pseudarthrobacter chlorophenolicus (strain ATCC 700700 / DSM 12829 / CIP 107037 / JCM 12360 / KCTC 9906 / NCIMB 13794 / A6) (Arthrobacter chlorophenolicus).